Reading from the N-terminus, the 292-residue chain is ATP synthase gamma chain (292 aa).

The protein belongs to the ATPase gamma chain family. In terms of assembly, F-type ATPases have 2 components, CF(1) - the catalytic core - and CF(0) - the membrane proton channel. CF(1) has five subunits: alpha(3), beta(3), gamma(1), delta(1), epsilon(1). CF(0) has three main subunits: a, b and c.

It is found in the cell membrane. In terms of biological role, produces ATP from ADP in the presence of a proton gradient across the membrane. The gamma chain is believed to be important in regulating ATPase activity and the flow of protons through the CF(0) complex. The sequence is that of ATP synthase gamma chain from Caldicellulosiruptor saccharolyticus (strain ATCC 43494 / DSM 8903 / Tp8T 6331).